Here is a 149-residue protein sequence, read N- to C-terminus: Nucleoside diphosphate kinase (149 aa).

Positions 9, 57, 85, 91, 102, and 112 each coordinate ATP. Histidine 115 serves as the catalytic Pros-phosphohistidine intermediate.

Belongs to the NDK family. As to quaternary structure, homotetramer. It depends on Mg(2+) as a cofactor.

The protein resides in the cytoplasm. It catalyses the reaction a 2'-deoxyribonucleoside 5'-diphosphate + ATP = a 2'-deoxyribonucleoside 5'-triphosphate + ADP. It carries out the reaction a ribonucleoside 5'-diphosphate + ATP = a ribonucleoside 5'-triphosphate + ADP. In terms of biological role, major role in the synthesis of nucleoside triphosphates other than ATP. The ATP gamma phosphate is transferred to the NDP beta phosphate via a ping-pong mechanism, using a phosphorylated active-site intermediate. The chain is Nucleoside diphosphate kinase from Desulfitobacterium hafniense (strain Y51).